A 156-amino-acid chain; its full sequence is Mediator of RNA polymerase II transcription subunit 28 (156 aa).

The interval 1 to 38 (MDYQQKPPQSSDPSPSPPDRPPGIRSPETPSNNQNNDI) is disordered. A coiled-coil region spans residues 104 to 156 (PSRAESLKKDIAVMEEELKTKDELIKKHMRLFQESQKLVKEQIEKHRDELEKV).

This sequence belongs to the Mediator complex subunit 28 family. Dimers. Component of the Mediator complex. Interacts with GEBPL.

Its subcellular location is the nucleus. In terms of biological role, component of the Mediator complex, a coactivator involved in the regulated transcription of nearly all RNA polymerase II-dependent genes. Mediator functions as a bridge to convey information from gene-specific regulatory proteins to the basal RNA polymerase II transcription machinery. The Mediator complex, having a compact conformation in its free form, is recruited to promoters by direct interactions with regulatory proteins and serves for the assembly of a functional pre-initiation complex with RNA polymerase II and the general transcription factors. This is Mediator of RNA polymerase II transcription subunit 28 from Arabidopsis thaliana (Mouse-ear cress).